The following is a 301-amino-acid chain: Lipoyl synthase (301 aa).

[4Fe-4S] cluster-binding residues include Cys-53, Cys-58, Cys-64, Cys-79, Cys-83, Cys-86, and Ser-290. The region spanning 65-279 (WSRKTATYML…RIYGKSIGFK (215 aa)) is the Radical SAM core domain.

This sequence belongs to the radical SAM superfamily. Lipoyl synthase family. Requires [4Fe-4S] cluster as cofactor.

The protein resides in the cytoplasm. It carries out the reaction [[Fe-S] cluster scaffold protein carrying a second [4Fe-4S](2+) cluster] + N(6)-octanoyl-L-lysyl-[protein] + 2 oxidized [2Fe-2S]-[ferredoxin] + 2 S-adenosyl-L-methionine + 4 H(+) = [[Fe-S] cluster scaffold protein] + N(6)-[(R)-dihydrolipoyl]-L-lysyl-[protein] + 4 Fe(3+) + 2 hydrogen sulfide + 2 5'-deoxyadenosine + 2 L-methionine + 2 reduced [2Fe-2S]-[ferredoxin]. It functions in the pathway protein modification; protein lipoylation via endogenous pathway; protein N(6)-(lipoyl)lysine from octanoyl-[acyl-carrier-protein]: step 2/2. In terms of biological role, catalyzes the radical-mediated insertion of two sulfur atoms into the C-6 and C-8 positions of the octanoyl moiety bound to the lipoyl domains of lipoate-dependent enzymes, thereby converting the octanoylated domains into lipoylated derivatives. In Leptospira interrogans serogroup Icterohaemorrhagiae serovar Lai (strain 56601), this protein is Lipoyl synthase.